The following is a 474-amino-acid chain: PRAME family member 2 (474 aa).

Residues 97-124 (RWKLQVLDLRDVDENFWARWPGAWALSC) form an LRR 1; degenerate repeat. The stretch at 179–203 (HLCCSKLVNYLTPIKYLRKSLKIIY) is one LRR 2; degenerate repeat. The stretch at 204–230 (INSIGELEIHNTCWPHLIRKLYCYLKE) is one LRR 3; degenerate repeat. One copy of the LRR 4; degenerate repeat lies at 231–265 (MKTLCKLVFSRCHHYTSDNELEGWLVTRFTSVFLR). 5 LRR repeats span residues 266-291 (LEHL…IRCL), 292-323 (QNPL…GYLK), 324-342 (HLNL…PLGA), 348-375 (AASL…GLSC), and 376-400 (CSQL…LLRH).

Belongs to the PRAME family.

This chain is PRAME family member 2, found in Homo sapiens (Human).